A 34-amino-acid polypeptide reads, in one-letter code: Potassium channel toxin alpha-KTx 6 hetlaxin (34 aa).

4 cysteine pairs are disulfide-bonded: Cys-3–Cys-24, Cys-9–Cys-29, Cys-13–Cys-31, and Cys-19–Cys-34. Cys-34 is modified (cysteine amide).

Contains 4 disulfide bonds. As to expression, expressed by the venom gland.

It is found in the secreted. Its function is as follows. Binds to voltage-gated potassium channels Kv1.3/KCNA3 (IC(50)=0.48 uM) and Kv1.1/KCNA1 (IC(50)=6.7 uM) and inhibits channel activity. The chain is Potassium channel toxin alpha-KTx 6 hetlaxin from Heterometrus laoticus (Thai giant scorpion).